We begin with the raw amino-acid sequence, 287 residues long: Pyridoxal kinase PdxY (287 aa).

Substrate is bound by residues Ser-10 and 45–46; that span reads TQ. ATP contacts are provided by residues Asp-112, Ala-144, Glu-149, Lys-182, and 209 to 212; that span reads RPLV. Asp-224 contacts substrate.

Belongs to the pyridoxine kinase family. PdxY subfamily. As to quaternary structure, homodimer. Mg(2+) is required as a cofactor.

The enzyme catalyses pyridoxal + ATP = pyridoxal 5'-phosphate + ADP + H(+). The protein operates within cofactor metabolism; pyridoxal 5'-phosphate salvage; pyridoxal 5'-phosphate from pyridoxal: step 1/1. Its function is as follows. Pyridoxal kinase involved in the salvage pathway of pyridoxal 5'-phosphate (PLP). Catalyzes the phosphorylation of pyridoxal to PLP. The protein is Pyridoxal kinase PdxY of Shigella sonnei (strain Ss046).